Reading from the N-terminus, the 70-residue chain is Conotoxin Im11.11 (70 aa).

The signal sequence occupies residues 1–25; the sequence is MFRLTSVGCILLVIAFLNLVGLTNA. 4 cysteine pairs are disulfide-bonded: cysteine 26-cysteine 40, cysteine 33-cysteine 45, cysteine 39-cysteine 49, and cysteine 44-cysteine 53. Proline 56 carries the post-translational modification Proline amide. A propeptide spanning residues 60 to 70 is cleaved from the precursor; it reads TRLQGFFKHRR.

Belongs to the conotoxin I2 superfamily. As to expression, expressed by the venom duct.

Its subcellular location is the secreted. Functionally, probable neurotoxin. In Conus imperialis (Imperial cone), this protein is Conotoxin Im11.11.